Here is a 481-residue protein sequence, read N- to C-terminus: O-phosphoseryl-tRNA(Sec) selenium transferase (481 aa).

Residues 1–36 (MKANFGKKEGEYSRLVSKSSNKLLNSLWEKKQIPEE) are tetramerization. Residue arginine 69 participates in pyridoxal 5'-phosphate binding. The phosphate loop (P-loop) stretch occupies residues 90 to 100 (GRSGNLLEIQP). The substrate site is built by arginine 91, serine 92, and glutamine 99. At lysine 277 the chain carries N6-(pyridoxal phosphate)lysine. Arginine 306 contributes to the substrate binding site.

This sequence belongs to the SepSecS family. In terms of assembly, homotetramer formed by a catalytic dimer and a non-catalytic dimer serving as a binding platform that orients tRNASec for catalysis. Each tetramer binds the CCA ends of two tRNAs which point to the active sites of the catalytic dimer. It depends on pyridoxal 5'-phosphate as a cofactor.

Its subcellular location is the cytoplasm. The enzyme catalyses O-phospho-L-seryl-tRNA(Sec) + selenophosphate + H2O = L-selenocysteinyl-tRNA(Sec) + 2 phosphate. The protein operates within aminoacyl-tRNA biosynthesis; selenocysteinyl-tRNA(Sec) biosynthesis; selenocysteinyl-tRNA(Sec) from L-seryl-tRNA(Sec) (archaeal/eukaryal route): step 2/2. Converts O-phosphoseryl-tRNA(Sec) to selenocysteinyl-tRNA(Sec) required for selenoprotein biosynthesis. The sequence is that of O-phosphoseryl-tRNA(Sec) selenium transferase (secs-1) from Caenorhabditis elegans.